Reading from the N-terminus, the 1802-residue chain is Protein TIC 214 (1802 aa).

A run of 6 helical transmembrane segments spans residues 19–39, 68–88, 91–111, 133–153, 176–196, and 227–247; these read IINS…FSIG, FIAG…HLAL, PHTI…WNNH, VFLN…SSML, VGWL…LVWI, and IFSI…PSPI.

It belongs to the TIC214 family. In terms of assembly, part of the Tic complex.

The protein localises to the plastid. It localises to the chloroplast inner membrane. In terms of biological role, involved in protein precursor import into chloroplasts. May be part of an intermediate translocation complex acting as a protein-conducting channel at the inner envelope. This Nasturtium officinale (Watercress) protein is Protein TIC 214.